We begin with the raw amino-acid sequence, 306 residues long: Curved DNA-binding protein (306 aa).

Positions 5–69 constitute a J domain; that stretch reads DYYAIMGVKP…QRRAEYDQLW (65 aa).

It is found in the cytoplasm. The protein localises to the nucleoid. DNA-binding protein that preferentially recognizes a curved DNA sequence. It is probably a functional analog of DnaJ; displays overlapping activities with DnaJ, but functions under different conditions, probably acting as a molecular chaperone in an adaptive response to environmental stresses other than heat shock. Lacks autonomous chaperone activity; binds native substrates and targets them for recognition by DnaK. Its activity is inhibited by the binding of CbpM. The polypeptide is Curved DNA-binding protein (Salmonella paratyphi A (strain ATCC 9150 / SARB42)).